The primary structure comprises 209 residues: Molybdenum cofactor guanylyltransferase (209 aa).

Residues 13 to 15 (LAG), K26, N54, D72, and D107 each bind GTP. Residue D107 participates in Mg(2+) binding.

Belongs to the MobA family. Monomer. Mg(2+) is required as a cofactor.

The protein localises to the cytoplasm. It catalyses the reaction Mo-molybdopterin + GTP + H(+) = Mo-molybdopterin guanine dinucleotide + diphosphate. Its function is as follows. Transfers a GMP moiety from GTP to Mo-molybdopterin (Mo-MPT) cofactor (Moco or molybdenum cofactor) to form Mo-molybdopterin guanine dinucleotide (Mo-MGD) cofactor. This Nitrobacter hamburgensis (strain DSM 10229 / NCIMB 13809 / X14) protein is Molybdenum cofactor guanylyltransferase.